The following is a 279-amino-acid chain: Cell division protein FtsQ (279 aa).

The disordered stretch occupies residues 1–28 (MTPMKKQLDKSLGSRRGATATRAKERAD). The Cytoplasmic portion of the chain corresponds to 1–48 (MTPMKKQLDKSLGSRRGATATRAKERADNRNTGPAAIVRLLAFIPWNR). Residues 49–69 (VLLHVSIFCFWLLVLSALIAG) traverse the membrane as a helical segment. Topologically, residues 70–279 (VKWLDRPVAT…WKADVTPEQG (210 aa)) are periplasmic. Positions 75-144 (RPVATVQVVG…DAVQVDLEEE (70 aa)) constitute a POTRA domain.

This sequence belongs to the FtsQ/DivIB family. FtsQ subfamily. Part of a complex composed of FtsB, FtsL and FtsQ.

It is found in the cell inner membrane. Its function is as follows. Essential cell division protein. May link together the upstream cell division proteins, which are predominantly cytoplasmic, with the downstream cell division proteins, which are predominantly periplasmic. May control correct divisome assembly. The polypeptide is Cell division protein FtsQ (Hahella chejuensis (strain KCTC 2396)).